The primary structure comprises 148 residues: MNLSNLKPAEGSTKTRKRIGRGPGSGLGGTSTRGHKGAKSRSGYKNKIGFEGGQMPIQRRLPKFGFKNINRVEYKAINIDTLQQMAEAKQLTKIGINELMEAGFISSSQVVKILGNGSLTAKLEVEAHAFSKSAEAAIQAAGGTVVKL.

A disordered region spans residues 1 to 51; the sequence is MNLSNLKPAEGSTKTRKRIGRGPGSGLGGTSTRGHKGAKSRSGYKNKIGFE. A compositionally biased stretch (gly residues) spans 21 to 31; sequence RGPGSGLGGTS. The segment covering 33-44 has biased composition (basic residues); sequence RGHKGAKSRSGY.

The protein belongs to the universal ribosomal protein uL15 family. As to quaternary structure, part of the 50S ribosomal subunit.

Functionally, binds to the 23S rRNA. This is Large ribosomal subunit protein uL15 from Parabacteroides distasonis (strain ATCC 8503 / DSM 20701 / CIP 104284 / JCM 5825 / NCTC 11152).